The sequence spans 449 residues: Capsid protein (449 aa).

The DNA-binding stretch occupies residues 1–43 (MARRARRPRGRFYSFRRGRWHHLKRLRRRYKFRHRRRQRYRRR). The tract at residues 6-47 (RRPRGRFYSFRRGRWHHLKRLRRRYKFRHRRRQRYRRRAFRK) is nuclear localization signals.

The protein belongs to the gyrovirus capsid protein family. Homomultimer (Potential). Interacts with Rep; this interaction relocates Rep into the nucleus.

Its subcellular location is the host nucleus. It localises to the virion. Self-assembles to form the virion icosahedral capsid with a T=1 symmetry. This very small capsid (25 nm in diameter) allows the virus to be very stable in the environment and resistant to some disinfectants, including detergents. Essential for the initial attachment to host receptors. After attachment, the virus is endocytosed and traffics to the nucleus. The capsid protein binds and transports the viral genome and Rep across the nuclear envelope. This chain is Capsid protein (VP1), found in Gallus gallus (Chicken).